The primary structure comprises 598 residues: Pentatricopeptide repeat-containing protein At1g09900 (598 aa).

PPR repeat units lie at residues 101 to 135 (EDVE…GNVP), 136 to 170 (DIIP…GAVP), 171 to 201 (DVIT…MSVS), 203 to 237 (DVVT…DCYP), 238 to 272 (DVIT…GCTP), 273 to 307 (DVVT…GCQP), 308 to 342 (NVIT…GFSP), 343 to 377 (SVVT…GCQP), 378 to 412 (NSLS…GCYP), 413 to 447 (DIVT…GCSP), 448 to 482 (VLIT…DLKP), 483 to 517 (DTIT…GIRP), 518 to 552 (NAVT…GCKP), and 553 to 587 (NETS…GLMK).

Belongs to the PPR family. P subfamily.

This Arabidopsis thaliana (Mouse-ear cress) protein is Pentatricopeptide repeat-containing protein At1g09900.